We begin with the raw amino-acid sequence, 197 residues long: Putative sulfur carrier protein aq_1421 (197 aa).

The active-site Cysteine persulfide intermediate is the cysteine 17.

Belongs to the sulfur carrier protein TusA family.

The polypeptide is Putative sulfur carrier protein aq_1421 (Aquifex aeolicus (strain VF5)).